A 186-amino-acid chain; its full sequence is Putative 3-methyladenine DNA glycosylase (186 aa).

Belongs to the DNA glycosylase MPG family.

The polypeptide is Putative 3-methyladenine DNA glycosylase (Borreliella afzelii (strain PKo) (Borrelia afzelii)).